A 500-amino-acid chain; its full sequence is Lysine--tRNA ligase (500 aa).

Residues E410 and E417 each contribute to the Mg(2+) site.

This sequence belongs to the class-II aminoacyl-tRNA synthetase family. Homodimer. Requires Mg(2+) as cofactor.

Its subcellular location is the cytoplasm. The catalysed reaction is tRNA(Lys) + L-lysine + ATP = L-lysyl-tRNA(Lys) + AMP + diphosphate. In Shewanella frigidimarina (strain NCIMB 400), this protein is Lysine--tRNA ligase.